We begin with the raw amino-acid sequence, 324 residues long: NADH-quinone oxidoreductase subunit H 2 (324 aa).

A run of 9 helical transmembrane segments spans residues 1–21, 77–97, 109–129, 147–167, 179–199, 214–234, 238–258, 263–283, and 298–318; these read MIGM…LLVV, ILAP…VAFG, VMFL…GALA, LGYE…AGSL, VWFV…GVAA, LVAG…FLGE, VLLV…GPVW, LPGP…FIWI, and FAWK…GLIV.

This sequence belongs to the complex I subunit 1 family. In terms of assembly, NDH-1 is composed of 14 different subunits. Subunits NuoA, H, J, K, L, M, N constitute the membrane sector of the complex.

The protein resides in the cell inner membrane. It catalyses the reaction a quinone + NADH + 5 H(+)(in) = a quinol + NAD(+) + 4 H(+)(out). Functionally, NDH-1 shuttles electrons from NADH, via FMN and iron-sulfur (Fe-S) centers, to quinones in the respiratory chain. The immediate electron acceptor for the enzyme in this species is believed to be ubiquinone. Couples the redox reaction to proton translocation (for every two electrons transferred, four hydrogen ions are translocated across the cytoplasmic membrane), and thus conserves the redox energy in a proton gradient. This subunit may bind ubiquinone. The chain is NADH-quinone oxidoreductase subunit H 2 from Rhodopseudomonas palustris (strain BisB18).